A 150-amino-acid chain; its full sequence is Lipoprotein signal peptidase (150 aa).

3 helical membrane-spanning segments follow: residues 5 to 25 (LSLVIIVVGIVADQIFKNWIV), 59 to 79 (QQWFFLILTPIVLVVALWFLW), and 83 to 103 (AQNWYFIGLTLIIAGALGNFI). Active-site residues include aspartate 113 and aspartate 129. Residues 124–144 (IFNIADILLSVGFVLLFIAIL) traverse the membrane as a helical segment.

Belongs to the peptidase A8 family.

It localises to the cell membrane. The catalysed reaction is Release of signal peptides from bacterial membrane prolipoproteins. Hydrolyzes -Xaa-Yaa-Zaa-|-(S,diacylglyceryl)Cys-, in which Xaa is hydrophobic (preferably Leu), and Yaa (Ala or Ser) and Zaa (Gly or Ala) have small, neutral side chains.. The protein operates within protein modification; lipoprotein biosynthesis (signal peptide cleavage). This protein specifically catalyzes the removal of signal peptides from prolipoproteins. The polypeptide is Lipoprotein signal peptidase (Lactococcus lactis subsp. lactis (strain IL1403) (Streptococcus lactis)).